The sequence spans 410 residues: Protein BTN2 (410 aa).

Disordered stretches follow at residues 223–264 (INEP…TKED) and 276–410 (MQEE…IEEI). 2 stretches are compositionally biased toward basic and acidic residues: residues 233 to 264 (SKIDESHDDVNMSESLKEEEAEKAKEPLTKED) and 276 to 311 (MQEESRKSEQEKAAKEDEERQKKEKEARLKARKESL). The stretch at 243–330 (NMSESLKEEE…QQKKLQNSKS (88 aa)) forms a coiled coil. Over residues 334–362 (SEIEASNKNNNSNSGSAESDNESINSDSD) the composition is skewed to low complexity. Polar residues predominate over residues 364 to 373 (TLDFSVSGNT).

In terms of assembly, interacts with RHB1, IST2, TDA3 and YIF1.

It is found in the cytoplasm. The protein localises to the late endosome. V-SNARE binding protein that facilitates specific protein retrieval from a late endosome to the Golgi. Modulates the rate of arginine uptake. Involved in pH homeostasis. Required for the correct localization of IST2. May be involved in ion homeostasis together with IST2. The sequence is that of Protein BTN2 (BTN2) from Saccharomyces cerevisiae (strain ATCC 204508 / S288c) (Baker's yeast).